The sequence spans 189 residues: uncharacterized protein (189 aa).

Residues 1–19 (MKRVLFFLLMIFVSFGVIA) form the signal peptide.

This is an uncharacterized protein from Escherichia coli (strain K12).